The sequence spans 449 residues: UDP-N-acetylmuramoylalanine--D-glutamate ligase (449 aa).

Position 118-124 (118-124) interacts with ATP; it reads GTNGKTT.

This sequence belongs to the MurCDEF family.

The protein resides in the cytoplasm. It catalyses the reaction UDP-N-acetyl-alpha-D-muramoyl-L-alanine + D-glutamate + ATP = UDP-N-acetyl-alpha-D-muramoyl-L-alanyl-D-glutamate + ADP + phosphate + H(+). It participates in cell wall biogenesis; peptidoglycan biosynthesis. Its function is as follows. Cell wall formation. Catalyzes the addition of glutamate to the nucleotide precursor UDP-N-acetylmuramoyl-L-alanine (UMA). This is UDP-N-acetylmuramoylalanine--D-glutamate ligase from Staphylococcus epidermidis (strain ATCC 12228 / FDA PCI 1200).